The primary structure comprises 643 residues: E3 ubiquitin-protein ligase AMFR (643 aa).

The interval 39-67 (PEAGPGEPDQLTASLQPEPPAPARPSAGG) is disordered. 6 helical membrane passes run 82 to 102 (LFVWVLVNTACCVLMLVAKLI), 122 to 142 (FWNFIFYKFIFIFGVLNVQTV), 145 to 165 (VVMWCLWFAGLVFLHLMVQLC), 186 to 206 (VLSLLVAMLLSCCGLAAVCSI), 215 to 235 (TLAFMAAESLLVTVRTAHVIL), and 276 to 296 (HIHMLLFGNIWLSMASLVIFM). The RING-type zinc finger occupies 341–379 (CAICWDSMQAARKLPCGHLFHNSCLRSWLEQDTSCPTCR). A helical transmembrane segment spans residues 429–449 (IASWLPSFSVEVMHTTNILGI). The CUE domain occupies 456 to 498 (QLNAMAHQIQEMFPQVPYHLVLQDLQLTRSVEITTDNILEGRI). Disordered stretches follow at residues 504 to 579 (TQRS…DERQ) and 596 to 624 (RFLNKSSEDDAASESFLPSEGASSDPVTL). Residues S516, S523, and S542 each carry the phosphoserine modification. A compositionally biased stretch (acidic residues) spans 548–563 (TLDFGEVEVEPSEVED). Positions 564 to 579 (FEARGSRFSKSADERQ) are enriched in basic and acidic residues. Positions 622–640 (VTLRRRMLAAAAERRLQKQ) are VCP/p97-interacting motif (VIM).

As to quaternary structure, interacts with RNF5. Also forms an ERAD complex containing VCP/p97, NGLY1; PSMC1; SAKS1 and RAD23B required for coupling retrotranslocation, ubiquitination and deglycosylation. Interacts with DERL1. Interacts (through a region distinct from the RING finger) with UBE2G2/UBC7. Component of the VCP/p97-AMFR/gp78 complex that enhances VCP/p97 binding to polyubiquitinated proteins for their degradation by the endoplasmic reticulum-associated degradation (ERAD) pathway. Interacts (via the VIM) with VCP/p97. Interacts (via its membrane domain) with INSIG1; the interaction initiates the sterol-mediated ubiquitination and degradation of HMGCR by the ERAD pathway. Interacts with AUP1, UBE2G2 and RNF139/TRC8; interaction with AUP1 facilitates interaction of AMFR with ubiquitin-conjugating enzyme UBE2G2 and ubiquitin ligase RNF139, leading to sterol-induced ubiquitination of HMGCR and its subsequent proteasomal degradation. Interacts with BAG6. Interacts with USP13 (via UBA 2 domain); the interaction is direct. Interacts with LMBR1L. Interacts with UBAC2 and CTNNB1. Interacts with C18orf32. (Microbial infection) Interacts with Staphylococcus aureus HIgB; this interaction regulates AMFR-mediated inflammation by promoting TAB3 ubiquitination to promote TAB3-TAK1 complex formation. Post-translationally, palmitoylation of the RING-type zing finger by ZDHHC6 promotes localization to the peripheral endoplasmic reticulum. As to expression, widely expressed.

Its subcellular location is the endoplasmic reticulum membrane. It carries out the reaction [E2 ubiquitin-conjugating enzyme]-S-ubiquitinyl-L-cysteine + [acceptor protein]-L-cysteine = [E2 ubiquitin-conjugating enzyme]-L-cysteine + [acceptor protein]-S-ubiquitinyl-L-cysteine.. Its pathway is protein modification; protein ubiquitination. In terms of biological role, E3 ubiquitin-protein ligase that mediates the polyubiquitination of lysine and cysteine residues on target proteins, such as CD3D, CYP3A4, CFTR, INSIG1, SOAT2/ACAT2 and APOB for proteasomal degradation. Component of a VCP/p97-AMFR/gp78 complex that participates in the final step of endoplasmic reticulum-associated degradation (ERAD). The VCP/p97-AMFR/gp78 complex is involved in the sterol-accelerated ERAD degradation of HMGCR through binding to the HMGCR-INSIG1 complex at the ER membrane. In addition, interaction of AMFR with AUP1 facilitates interaction of AMFR with ubiquitin-conjugating enzyme UBE2G2 and ubiquitin ligase RNF139, leading to sterol-induced HMGCR ubiquitination. The ubiquitinated HMGCR is then released from the ER into the cytosol for subsequent destruction. In addition to ubiquitination on lysine residues, catalyzes ubiquitination on cysteine residues: together with INSIG1, mediates polyubiquitination of SOAT2/ACAT2 at 'Cys-277', leading to its degradation when the lipid levels are low. Catalyzes ubiquitination and subsequent degradation of INSIG1 when cells are depleted of sterols. Mediates polyubiquitination of INSIG2 at 'Cys-215' in some tissues, leading to its degradation. Also regulates ERAD through the ubiquitination of UBL4A a component of the BAG6/BAT3 complex. Also acts as a scaffold protein to assemble a complex that couples ubiquitination, retranslocation and deglycosylation. Mediates tumor invasion and metastasis as a receptor for the GPI/autocrine motility factor. In association with LMBR1L and UBAC2, negatively regulates the canonical Wnt signaling pathway in the lymphocytes by promoting the ubiquitin-mediated degradation of CTNNB1 and Wnt receptors FZD6 and LRP6. Regulates NF-kappa-B and MAPK signaling pathways by mediating 'Lys-27'-linked polyubiquitination of TAB3 and promoting subsequent TAK1/MAP3K7 activation. Required for proper lipid homeostasis. The polypeptide is E3 ubiquitin-protein ligase AMFR (Homo sapiens (Human)).